Here is a 698-residue protein sequence, read N- to C-terminus: Elongation factor G (698 aa).

In terms of domain architecture, tr-type G spans 8 to 284 (ANVRNIGIMA…AVVDYLPSPL (277 aa)). GTP-binding positions include 17–24 (AHIDAGKT), 81–85 (DTPGH), and 135–138 (NKLD).

This sequence belongs to the TRAFAC class translation factor GTPase superfamily. Classic translation factor GTPase family. EF-G/EF-2 subfamily.

The protein resides in the cytoplasm. In terms of biological role, catalyzes the GTP-dependent ribosomal translocation step during translation elongation. During this step, the ribosome changes from the pre-translocational (PRE) to the post-translocational (POST) state as the newly formed A-site-bound peptidyl-tRNA and P-site-bound deacylated tRNA move to the P and E sites, respectively. Catalyzes the coordinated movement of the two tRNA molecules, the mRNA and conformational changes in the ribosome. The chain is Elongation factor G from Salinispora tropica (strain ATCC BAA-916 / DSM 44818 / JCM 13857 / NBRC 105044 / CNB-440).